A 374-amino-acid chain; its full sequence is WAT1-related protein At2g39510 (374 aa).

A run of 10 helical transmembrane segments spans residues 9-29 (FITV…AKFA), 38-58 (VLAS…AYFL), 64-84 (PKMT…EPTI), 99-119 (TFTA…AWIF), 135-155 (ILGT…KGPL), 182-202 (GASL…LQAI), 212-232 (SLTA…ALFI), 249-269 (LAAV…QGVI), 284-304 (LSMV…MFLG), and 306-326 (ILGA…KSKD). EamA domains lie at 19 to 147 (YAGL…GAML) and 191 to 320 (ICWA…YSVL). The disordered stretch occupies residues 350-374 (SKANAKMDTNDASVVISRPNTNESV).

It belongs to the drug/metabolite transporter (DMT) superfamily. Plant drug/metabolite exporter (P-DME) (TC 2.A.7.4) family.

The protein localises to the membrane. In Arabidopsis thaliana (Mouse-ear cress), this protein is WAT1-related protein At2g39510.